The sequence spans 147 residues: Nucleoside diphosphate kinase (147 aa).

Positions 9, 57, 85, 91, 102, and 112 each coordinate ATP. Histidine 115 functions as the Pros-phosphohistidine intermediate in the catalytic mechanism.

Belongs to the NDK family. In terms of assembly, homotetramer. Mg(2+) serves as cofactor.

Its subcellular location is the cytoplasm. The enzyme catalyses a 2'-deoxyribonucleoside 5'-diphosphate + ATP = a 2'-deoxyribonucleoside 5'-triphosphate + ADP. It carries out the reaction a ribonucleoside 5'-diphosphate + ATP = a ribonucleoside 5'-triphosphate + ADP. Functionally, major role in the synthesis of nucleoside triphosphates other than ATP. The ATP gamma phosphate is transferred to the NDP beta phosphate via a ping-pong mechanism, using a phosphorylated active-site intermediate. This Listeria innocua serovar 6a (strain ATCC BAA-680 / CLIP 11262) protein is Nucleoside diphosphate kinase.